We begin with the raw amino-acid sequence, 339 residues long: Biotin synthase (339 aa).

The Radical SAM core domain maps to 51-278 (SEVELATLLS…KARVRLSAGR (228 aa)). Residues Cys-66, Cys-70, and Cys-73 each coordinate [4Fe-4S] cluster. [2Fe-2S] cluster contacts are provided by Cys-110, Cys-141, Cys-201, and Arg-273.

It belongs to the radical SAM superfamily. Biotin synthase family. In terms of assembly, homodimer. Requires [4Fe-4S] cluster as cofactor. The cofactor is [2Fe-2S] cluster.

The enzyme catalyses (4R,5S)-dethiobiotin + (sulfur carrier)-SH + 2 reduced [2Fe-2S]-[ferredoxin] + 2 S-adenosyl-L-methionine = (sulfur carrier)-H + biotin + 2 5'-deoxyadenosine + 2 L-methionine + 2 oxidized [2Fe-2S]-[ferredoxin]. It participates in cofactor biosynthesis; biotin biosynthesis; biotin from 7,8-diaminononanoate: step 2/2. Its function is as follows. Catalyzes the conversion of dethiobiotin (DTB) to biotin by the insertion of a sulfur atom into dethiobiotin via a radical-based mechanism. The sequence is that of Biotin synthase from Herminiimonas arsenicoxydans.